A 234-amino-acid polypeptide reads, in one-letter code: (5-formylfuran-3-yl)methyl phosphate synthase (234 aa).

K27 functions as the Schiff-base intermediate with substrate in the catalytic mechanism. The active-site Proton acceptor is K85.

This sequence belongs to the MfnB family.

The enzyme catalyses 2 D-glyceraldehyde 3-phosphate = 4-(hydroxymethyl)-2-furancarboxaldehyde phosphate + phosphate + 2 H2O. It participates in cofactor biosynthesis; methanofuran biosynthesis. Catalyzes the formation of 4-(hydroxymethyl)-2-furancarboxaldehyde phosphate (4-HFC-P) from two molecules of glyceraldehyde-3-P (GA-3-P). This chain is (5-formylfuran-3-yl)methyl phosphate synthase, found in Methanosarcina acetivorans (strain ATCC 35395 / DSM 2834 / JCM 12185 / C2A).